Here is a 261-residue protein sequence, read N- to C-terminus: Class II histocompatibility antigen, M alpha chain (261 aa).

A signal peptide spans 1 to 26; that stretch reads MEHEQKSGAVLLRLLRLLWLLPHSWA. Positions 27–124 are alpha-1; that stretch reads VLEASTPVLW…KLEGQIPVSR (98 aa). The Lumenal portion of the chain corresponds to 27–231; sequence VLEASTPVLW…ALPSDLLENA (205 aa). An N-linked (GlcNAc...) asparagine glycan is attached at asparagine 41. 2 cysteine pairs are disulfide-bonded: cysteine 50-cysteine 105 and cysteine 147-cysteine 202. The region spanning 114 to 215 is the Ig-like C1-type domain; the sequence is PKLEGQIPVS…HEIDRYTAIA (102 aa). The interval 125–217 is alpha-2; the sequence is GLSVAEVFTL…IDRYTAIAYW (93 aa). The tract at residues 218 to 231 is connecting peptide; sequence VPQNALPSDLLENA. A helical membrane pass occupies residues 232–252; sequence LCGVAFALGVLGTIIGIVFFL. The Cytoplasmic portion of the chain corresponds to 253–261; the sequence is CSQRPCSGD.

Belongs to the MHC class II family. In terms of assembly, heterodimer of an alpha chain (DMA) and a beta chain (DMB). Interacts with MHCII; this interaction mediates rapid selection of high-affinity peptides.

It is found in the late endosome membrane. The protein localises to the lysosome membrane. Plays a critical role in catalyzing the release of class II-associated invariant chain peptide (CLIP) from newly synthesized MHC class II molecules and freeing the peptide binding site for acquisition of antigenic peptides. In Mus musculus (Mouse), this protein is Class II histocompatibility antigen, M alpha chain (H2-DMa).